A 612-amino-acid polypeptide reads, in one-letter code: Probable methyltransferase PMT9 (612 aa).

Over 1–14 (MKHFRTERVRATPK) the chain is Cytoplasmic. A helical; Signal-anchor for type II membrane protein membrane pass occupies residues 15–35 (LFTYVLVGFIALLGLTCLYYG). Residues 36 to 612 (SSFAPGSRKS…LWSLPAISVS (577 aa)) are Lumenal-facing. N-linked (GlcNAc...) asparagine glycans are attached at residues asparagine 107, asparagine 383, and asparagine 562.

It belongs to the methyltransferase superfamily.

It localises to the golgi apparatus membrane. In Arabidopsis thaliana (Mouse-ear cress), this protein is Probable methyltransferase PMT9.